A 48-amino-acid polypeptide reads, in one-letter code: DNA-directed RNA polymerase subunit Rpo12 (48 aa).

Residues C6, C9, C26, and C29 each contribute to the Zn(2+) site.

It belongs to the archaeal Rpo12/eukaryotic RPC10 RNA polymerase subunit family. As to quaternary structure, part of the 13-subunit RNA polymerase. It depends on Zn(2+) as a cofactor.

Its subcellular location is the cytoplasm. It catalyses the reaction RNA(n) + a ribonucleoside 5'-triphosphate = RNA(n+1) + diphosphate. DNA-dependent RNA polymerase (RNAP) catalyzes the transcription of DNA into RNA using the four ribonucleoside triphosphates as substrates. This Sulfolobus acidocaldarius (strain ATCC 33909 / DSM 639 / JCM 8929 / NBRC 15157 / NCIMB 11770) protein is DNA-directed RNA polymerase subunit Rpo12.